A 335-amino-acid polypeptide reads, in one-letter code: Probable cytosolic iron-sulfur protein assembly protein Ciao1 (335 aa).

7 WD repeats span residues 12–51 (GHKGRIWGVAWHPKGNVFASCGEDKAIRIWSLTGNTWSTK), 57–96 (GHKRTIREIRWSPCGQYLASASFDATTAIWSKSSGEFECN), 101–140 (GHENEVKSVSWSRSGGLLATCSRDKSVWIWEVAGDDEFEC), 146–185 (PHTQDVKRVVWHPTKDVLASASYDNTIKMFAEEPIDNDWD), 192–231 (SHTSTVWGIDFDADGERLVSCSDDTTIKIWKAYHPGNTAG), 250–289 (QHSRAIYDVSWCKLTGLIATACGDDGIRIFKETSDSKPDE), and 301–335 (AHDQDVNSVQWNPVVAGQLISCSDDGTIKIWKVSE).

The protein belongs to the WD repeat CIA1 family.

In terms of biological role, essential component of the cytosolic iron-sulfur (Fe/S) protein assembly machinery. Required for the maturation of extramitochondrial Fe/S proteins. This Drosophila simulans (Fruit fly) protein is Probable cytosolic iron-sulfur protein assembly protein Ciao1.